A 452-amino-acid chain; its full sequence is Bifunctional protein GlmU (452 aa).

The interval 1 to 226 (MSLSVVILAA…ATEVEGVNTR (226 aa)) is pyrophosphorylase. UDP-N-acetyl-alpha-D-glucosamine-binding positions include 8 to 11 (LAAG), lysine 22, glutamine 73, 78 to 79 (GT), 100 to 102 (YGD), glycine 137, glutamate 151, asparagine 166, and asparagine 224. Aspartate 102 contacts Mg(2+). Mg(2+) is bound at residue asparagine 224. The interval 227 to 247 (LQLANLERAYQLKKATELLLS) is linker. The segment at 248 to 452 (GVMLRDPNRF…INNWKRPTKK (205 aa)) is N-acetyltransferase. UDP-N-acetyl-alpha-D-glucosamine is bound by residues arginine 330 and lysine 348. The Proton acceptor role is filled by histidine 360. UDP-N-acetyl-alpha-D-glucosamine contacts are provided by tyrosine 363 and asparagine 374. Acetyl-CoA-binding positions include alanine 377, 383–384 (NY), serine 402, alanine 420, and arginine 437.

In the N-terminal section; belongs to the N-acetylglucosamine-1-phosphate uridyltransferase family. It in the C-terminal section; belongs to the transferase hexapeptide repeat family. Homotrimer. The cofactor is Mg(2+).

Its subcellular location is the cytoplasm. It catalyses the reaction alpha-D-glucosamine 1-phosphate + acetyl-CoA = N-acetyl-alpha-D-glucosamine 1-phosphate + CoA + H(+). The catalysed reaction is N-acetyl-alpha-D-glucosamine 1-phosphate + UTP + H(+) = UDP-N-acetyl-alpha-D-glucosamine + diphosphate. It participates in nucleotide-sugar biosynthesis; UDP-N-acetyl-alpha-D-glucosamine biosynthesis; N-acetyl-alpha-D-glucosamine 1-phosphate from alpha-D-glucosamine 6-phosphate (route II): step 2/2. Its pathway is nucleotide-sugar biosynthesis; UDP-N-acetyl-alpha-D-glucosamine biosynthesis; UDP-N-acetyl-alpha-D-glucosamine from N-acetyl-alpha-D-glucosamine 1-phosphate: step 1/1. The protein operates within bacterial outer membrane biogenesis; LPS lipid A biosynthesis. Its function is as follows. Catalyzes the last two sequential reactions in the de novo biosynthetic pathway for UDP-N-acetylglucosamine (UDP-GlcNAc). The C-terminal domain catalyzes the transfer of acetyl group from acetyl coenzyme A to glucosamine-1-phosphate (GlcN-1-P) to produce N-acetylglucosamine-1-phosphate (GlcNAc-1-P), which is converted into UDP-GlcNAc by the transfer of uridine 5-monophosphate (from uridine 5-triphosphate), a reaction catalyzed by the N-terminal domain. The polypeptide is Bifunctional protein GlmU (Psychromonas ingrahamii (strain DSM 17664 / CCUG 51855 / 37)).